Consider the following 309-residue polypeptide: Pantoate--beta-alanine ligase (309 aa).

This sequence belongs to the pantothenate synthetase family.

It localises to the cytoplasm. It is found in the nucleus. It carries out the reaction (R)-pantoate + beta-alanine + ATP = (R)-pantothenate + AMP + diphosphate + H(+). It participates in cofactor biosynthesis; (R)-pantothenate biosynthesis; (R)-pantothenate from (R)-pantoate and beta-alanine: step 1/1. Required for pantothenic acid biosynthesis. This is Pantoate--beta-alanine ligase (PAN6) from Saccharomyces cerevisiae (strain ATCC 204508 / S288c) (Baker's yeast).